The primary structure comprises 504 residues: Maturase K (504 aa).

It belongs to the intron maturase 2 family. MatK subfamily.

It localises to the plastid. It is found in the chloroplast. In terms of biological role, usually encoded in the trnK tRNA gene intron. Probably assists in splicing its own and other chloroplast group II introns. This Pseudoturritis turrita (Tower rock-cress) protein is Maturase K.